Reading from the N-terminus, the 504-residue chain is Glucose-6-phosphate isomerase (504 aa).

The active-site Proton donor is glutamate 333. Residues histidine 364 and lysine 473 contribute to the active site.

Belongs to the GPI family.

It is found in the cytoplasm. It catalyses the reaction alpha-D-glucose 6-phosphate = beta-D-fructose 6-phosphate. It functions in the pathway carbohydrate biosynthesis; gluconeogenesis. Its pathway is carbohydrate degradation; glycolysis; D-glyceraldehyde 3-phosphate and glycerone phosphate from D-glucose: step 2/4. Functionally, catalyzes the reversible isomerization of glucose-6-phosphate to fructose-6-phosphate. The protein is Glucose-6-phosphate isomerase of Stenotrophomonas maltophilia (strain R551-3).